Here is a 687-residue protein sequence, read N- to C-terminus: Amine oxidase [copper-containing] gamma 2 (687 aa).

Residues 1-24 (MVELSFSQLLVLLLSLLFLFTTLA) form the signal peptide. Residue Asn-154 is glycosylated (N-linked (GlcNAc...) asparagine). A disulfide bridge links Cys-169 with Cys-191. An N-linked (GlcNAc...) asparagine glycan is attached at Asn-244. Substrate is bound at residue 333–344 (YMDAGEFGLGPS). Asp-335 (proton acceptor) is an active-site residue. An intrachain disulfide couples Cys-354 to Cys-380. 420 to 425 (VGNYDY) serves as a coordination point for substrate. Tyr-423 serves as the catalytic Schiff-base intermediate with substrate; via topaquinone. The residue at position 423 (Tyr-423) is a 2',4',5'-topaquinone. His-480 and His-482 together coordinate Cu cation. Residues Asp-489, Met-490, and Asp-491 each coordinate Mn(2+). N-linked (GlcNAc...) asparagine glycosylation is found at Asn-497 and Asn-598. The Mn(2+) site is built by Asp-632 and Ile-633. His-643 contributes to the Cu cation binding site.

This sequence belongs to the copper/topaquinone oxidase family. As to quaternary structure, homodimer. Cu cation serves as cofactor. It depends on Zn(2+) as a cofactor. Requires L-topaquinone as cofactor. Mn(2+) is required as a cofactor. In terms of processing, topaquinone (TPQ) is generated by copper-dependent autoxidation of a specific tyrosyl residue. As to expression, expressed in roots, leaves and cotyledons.

It localises to the secreted. Its subcellular location is the extracellular space. The protein resides in the apoplast. The enzyme catalyses a primary methyl amine + O2 + H2O = an aldehyde + H2O2 + NH4(+). Its pathway is amine and polyamine degradation; putrescine degradation. Copper amine oxidase that can use putrescine and spermidine as substrates. This Arabidopsis thaliana (Mouse-ear cress) protein is Amine oxidase [copper-containing] gamma 2.